A 146-amino-acid polypeptide reads, in one-letter code: Globin (146 aa).

N-acetylserine is present on Ser1. The 146-residue stretch at 1-146 (SLSGAEADLL…IIDALKKAGK (146 aa)) folds into the Globin domain. Position 95 (His95) interacts with heme b.

This sequence belongs to the globin family. As to quaternary structure, monomer.

This is Globin from Bursatella leachii (Ragged sea hare).